The sequence spans 278 residues: Sulfur carrier protein FdhD (278 aa).

Residue C121 is the Cysteine persulfide intermediate of the active site. Position 260–265 (260–265 (FCKPGR)) interacts with Mo-bis(molybdopterin guanine dinucleotide).

The protein belongs to the FdhD family.

The protein resides in the cytoplasm. In terms of biological role, required for formate dehydrogenase (FDH) activity. Acts as a sulfur carrier protein that transfers sulfur from IscS to the molybdenum cofactor prior to its insertion into FDH. This chain is Sulfur carrier protein FdhD, found in Salmonella schwarzengrund (strain CVM19633).